The primary structure comprises 164 residues: Lectin (164 aa).

Positions 1–15 are cleaved as a signal peptide; sequence TVATILTILASTCMA. The region spanning 16–125 is the Bulb-type lectin domain; sequence RNVLVNNEGL…DIWSTGTYRK (110 aa). C44 and C68 are disulfide-bonded.

In terms of assembly, homotetramer. Not glycosylated.

In terms of biological role, mannose-specific lectin. Induces a Th1-type immune response in vitro. Causes a 4-fold increase in the proliferation of murine thymocytes and a significant increase in the production of nitric oxide at 24 hours in a macrophage cell line. Stimulates the production of the pro-inflammatory cytokines TNF and IL12 by rat peritoneal macrophages in a dose-dependent manner and of the cytokines IFNG and IL2 in murine thymocytes. Has hemagglutination activity towards rabbit erythrocytes. This chain is Lectin, found in Allium cepa (Onion).